Here is a 240-residue protein sequence, read N- to C-terminus: Uridylate kinase (240 aa).

13–16 contacts ATP; it reads KFSG. G55 lines the UMP pocket. Residues G56 and R60 each contribute to the ATP site. Residues D76 and 137-144 each bind UMP; that span reads TGNPFFTT. Residues T164, Y170, and D173 each coordinate ATP.

This sequence belongs to the UMP kinase family. In terms of assembly, homohexamer.

The protein resides in the cytoplasm. It carries out the reaction UMP + ATP = UDP + ADP. It functions in the pathway pyrimidine metabolism; CTP biosynthesis via de novo pathway; UDP from UMP (UMPK route): step 1/1. Inhibited by UTP. In terms of biological role, catalyzes the reversible phosphorylation of UMP to UDP. This chain is Uridylate kinase, found in Helicobacter pylori (strain J99 / ATCC 700824) (Campylobacter pylori J99).